A 165-amino-acid chain; its full sequence is UPF0114 protein in repA1-repA2 intergenic region (165 aa).

A run of 3 helical transmembrane segments spans residues 15-35, 53-73, and 136-156; these read LMFP…VKFF, LVLI…LVMV, and IMWC…MAYI.

This sequence belongs to the UPF0114 family.

The protein resides in the cell membrane. The sequence is that of UPF0114 protein in repA1-repA2 intergenic region from Buchnera aphidicola subsp. Thelaxes suberi.